The sequence spans 188 residues: Elongation factor P (188 aa).

The residue at position 34 (Lys-34) is an N6-(3,6-diaminohexanoyl)-5-hydroxylysine.

It belongs to the elongation factor P family. May be beta-lysylated on the epsilon-amino group of Lys-34 by the combined action of EpmA and EpmB, and then hydroxylated on the C5 position of the same residue by EpmC (if this protein is present). Lysylation is critical for the stimulatory effect of EF-P on peptide-bond formation. The lysylation moiety may extend toward the peptidyltransferase center and stabilize the terminal 3-CCA end of the tRNA. Hydroxylation of the C5 position on Lys-34 may allow additional potential stabilizing hydrogen-bond interactions with the P-tRNA.

Its subcellular location is the cytoplasm. The protein operates within protein biosynthesis; polypeptide chain elongation. Involved in peptide bond synthesis. Alleviates ribosome stalling that occurs when 3 or more consecutive Pro residues or the sequence PPG is present in a protein, possibly by augmenting the peptidyl transferase activity of the ribosome. Modification of Lys-34 is required for alleviation. This is Elongation factor P from Hamiltonella defensa subsp. Acyrthosiphon pisum (strain 5AT).